Reading from the N-terminus, the 134-residue chain is Profilin-2 (134 aa).

C13 and C118 form a disulfide bridge. The Involved in PIP2 interaction motif lies at 84 to 100 (AVIRGKKGSGGITIKKT). Residue T114 is modified to Phosphothreonine.

It belongs to the profilin family. Occurs in many kinds of cells as a complex with monomeric actin in a 1:1 ratio. In terms of processing, phosphorylated by MAP kinases.

Its subcellular location is the cytoplasm. The protein resides in the cytoskeleton. Functionally, binds to actin and affects the structure of the cytoskeleton. At high concentrations, profilin prevents the polymerization of actin, whereas it enhances it at low concentrations. By binding to PIP2, it inhibits the formation of IP3 and DG. The sequence is that of Profilin-2 (PRO2) from Olea europaea (Common olive).